Here is a 106-residue protein sequence, read N- to C-terminus: Large ribosomal subunit protein eL42 (106 aa).

Belongs to the eukaryotic ribosomal protein eL42 family.

This is Large ribosomal subunit protein eL42 (RPL44) from Meyerozyma guilliermondii (strain ATCC 6260 / CBS 566 / DSM 6381 / JCM 1539 / NBRC 10279 / NRRL Y-324) (Yeast).